A 499-amino-acid polypeptide reads, in one-letter code: Endosomal/lysosomal proton channel TMEM175 (499 aa).

Polar residues predominate over residues 1–10 (MSRLQVQEQA). The disordered stretch occupies residues 1–26 (MSRLQVQEQAVDSEGDSSLYRRDEEG). At 1 to 30 (MSRLQVQEQAVDSEGDSSLYRRDEEGTQSS) the chain is on the cytoplasmic side. A helical membrane pass occupies residues 31-53 (HRMLGFSDALLSIIATVMILPVT). Positions 32–38 (RMLGFSD) match the RxxxFSD motif 1 motif. The Lumenal segment spans residues 54–74 (HTEISPEQQFDKSIQKLLATR). The short helix H1-1 stretch occupies residues 55–60 (TEISPE). Positions 62 to 68 (QFDKSIQ) are short helix H2-1. A helical transmembrane segment spans residues 75-97 (IAVYLMTFLIVTVAWAAHTRLFQ). Residues 98–103 (VVGKID) lie on the Cytoplasmic side of the membrane. A helical membrane pass occupies residues 104 to 125 (DTLALLNLACMMTITLLPYTFS). Topologically, residues 126-135 (LMVTFPDVPL) are lumenal. The helical transmembrane segment at 136–157 (GIFLFCMCVIAIGSVQAMIVGY) threads the bilayer. Topologically, residues 158-181 (AFHFPHLLNPQIQCSTHRALSRRH) are cytoplasmic. A helical membrane pass occupies residues 182–202 (ILHLVLRGPALCFVAAVFSLF). Topologically, residues 203-207 (FFPLS) are lumenal. A helical membrane pass occupies residues 208–227 (YLLMVTVIFLPHISKATTWC). At 228-254 (KDKFMGHRESPAHNVEPFSIDLHAPLS) the chain is on the cytoplasmic side. Residues 255-279 (KERVEAFSDGVYAIVATLLILDICE) form a helical membrane-spanning segment. The RxxxFSD motif 2 signature appears at 257–263 (RVEAFSD). The Lumenal portion of the chain corresponds to 280-306 (DNVPDPKDVQQKFSGSLVAALGAYGPQ). Positions 285–293 (PKDVQQKFS) are short helix H1-2. A short helix H2-2 region spans residues 295 to 301 (SLVAALG). A helical transmembrane segment spans residues 307-329 (FLAYFGSFATVGLLWFAHHSLFL). The Cytoplasmic segment spans residues 330–335 (HVRKAT). Residues 336–357 (QTMGLFNILSLAFVGGLPLAYQ) traverse the membrane as a helical segment. Residues 358–372 (QTSAFARQPRDELER) are Lumenal-facing. The chain crosses the membrane as a helical span at residues 373-393 (VRVSCAIIFFASIFQFAIWTT). At 394 to 413 (ALLHQRETLQPAVQFGGQEH) the chain is on the cytoplasmic side. A helical membrane pass occupies residues 414 to 437 (AFMFAKLALYPCASLLAFAATCLL). At 438–439 (SR) the chain is on the lumenal side. The helical transmembrane segment at 440–466 (FSTAIFHLMQIAVPFAFLLLRLLVRLA) threads the bilayer. Over 467–499 (LAGLQVLWDLWPERPQQDQGEPETQSQLLPASC) the chain is Cytoplasmic.

Belongs to the TMEM175 family. Homodimer. Interacts with AKT (AKT1, AKT2 or AKT3); leading to formation of the lysoK(GF) complex, which activates the channel. Interacts with LAMP1; inhibiting the proton channel activity of TMEM175. Interacts with LAMP2; inhibiting the proton channel activity of TMEM175.

Its subcellular location is the endosome membrane. The protein resides in the lysosome membrane. The catalysed reaction is H(+)(in) = H(+)(out). The enzyme catalyses K(+)(in) = K(+)(out). Its activity is regulated as follows. Active at low pH (under pH 4.6): proton channel activity is activated by luminal side protons. Polyunsaturated fatty acids, such as arachidonic acid, also activate the channel activity. Proton channel activity is directly inhibited by LAMP1 or LAMP2, facilitating lysosomal acidification. Channel activity is activated following interaction with AKT (AKT1, AKT2 or AKT3): interaction promotes activation from closed to an open state. Activation by AKT is independent of AKT serine/threonine-protein kinase activity. Functionally, proton-activated proton channel that catalyzes proton efflux from endosomes and lysosomes to maintain a steady-state pH. Activated at low pH (under pH 4.6) by luminal side protons: selectively mediates lysosomal proton release from lysosomes, eliciting a proton leak that balances V-ATPase activity to maintain pH homeostasis. Regulation of lumenal pH stability is required for autophagosome-lysosome fusion. Also acts as a potassium channel at higher pH, regulating potassium conductance in endosomes and lysosomes. Constitutes the pore-forming subunit of the lysoK(GF) complex, a complex activated by extracellular growth factors. The lysoK(GF) complex is composed of TMEM175 and AKT (AKT1, AKT2 or AKT3), a major target of growth factor receptors: in the complex, TMEM175 channel is opened by conformational changes by AKT, leading to its activation. The lysoK(GF) complex is required to protect neurons against stress-induced damage. The chain is Endosomal/lysosomal proton channel TMEM175 from Rattus norvegicus (Rat).